The chain runs to 450 residues: MLAVAVLAAGKGTRMKSNLPKVLQPLAGATLVERVLASARNLRPERRLLIVGHQAERVEQQLSAVDGLEFVLQQPQNGTGHAVQQLLDPLANFEGELLVLNGDVPLLRAETIDQLVSTHRSSGAQVTLLTARLDDPTGYGRVFADEQGAVSSIIEHRDCSEEQRRNNLTNAGIYCFNWTALAEVLPKLSTDNDQGELYLTDTVAMLTKAMHVEVADPDEVNGINNRQQLAQCETMLQERLRHHWMAEGVTFVDPASCTLSEGCQFGRDVVIEPQTHLRGRCQIGDESRLGPGSLIEDAELGRGVTVVMSVVREASVGDGVCIGPFAHLRPAAVIGNNCRIGNFVEVKKSTVGEASKVNHLSYIGDAELGASVNVGAGTITANYDGVNKHRTVIGDGSKTGANSVLVAPIQLGNKVTVAAGSTLTKNVPDGALALGRAKQLIKENWAGPQG.

A pyrophosphorylase region spans residues 1–226; that stretch reads MLAVAVLAAG…PDEVNGINNR (226 aa). Residues 7–10, K21, Q73, and 78–79 each bind UDP-N-acetyl-alpha-D-glucosamine; these read LAAG and GT. A Mg(2+)-binding site is contributed by D103. Positions 140, 155, 170, and 224 each coordinate UDP-N-acetyl-alpha-D-glucosamine. Mg(2+) is bound at residue N224. A linker region spans residues 227-247; the sequence is QQLAQCETMLQERLRHHWMAE. Residues 248 to 450 are N-acetyltransferase; it reads GVTFVDPASC…IKENWAGPQG (203 aa). UDP-N-acetyl-alpha-D-glucosamine is bound by residues R329 and K347. H359 (proton acceptor) is an active-site residue. 2 residues coordinate UDP-N-acetyl-alpha-D-glucosamine: Y362 and N373. Acetyl-CoA is bound by residues A376, 382–383, A419, and R436; that span reads NY.

It in the N-terminal section; belongs to the N-acetylglucosamine-1-phosphate uridyltransferase family. The protein in the C-terminal section; belongs to the transferase hexapeptide repeat family. As to quaternary structure, homotrimer. The cofactor is Mg(2+).

It is found in the cytoplasm. The catalysed reaction is alpha-D-glucosamine 1-phosphate + acetyl-CoA = N-acetyl-alpha-D-glucosamine 1-phosphate + CoA + H(+). It carries out the reaction N-acetyl-alpha-D-glucosamine 1-phosphate + UTP + H(+) = UDP-N-acetyl-alpha-D-glucosamine + diphosphate. Its pathway is nucleotide-sugar biosynthesis; UDP-N-acetyl-alpha-D-glucosamine biosynthesis; N-acetyl-alpha-D-glucosamine 1-phosphate from alpha-D-glucosamine 6-phosphate (route II): step 2/2. The protein operates within nucleotide-sugar biosynthesis; UDP-N-acetyl-alpha-D-glucosamine biosynthesis; UDP-N-acetyl-alpha-D-glucosamine from N-acetyl-alpha-D-glucosamine 1-phosphate: step 1/1. It functions in the pathway bacterial outer membrane biogenesis; LPS lipid A biosynthesis. Its function is as follows. Catalyzes the last two sequential reactions in the de novo biosynthetic pathway for UDP-N-acetylglucosamine (UDP-GlcNAc). The C-terminal domain catalyzes the transfer of acetyl group from acetyl coenzyme A to glucosamine-1-phosphate (GlcN-1-P) to produce N-acetylglucosamine-1-phosphate (GlcNAc-1-P), which is converted into UDP-GlcNAc by the transfer of uridine 5-monophosphate (from uridine 5-triphosphate), a reaction catalyzed by the N-terminal domain. The sequence is that of Bifunctional protein GlmU from Synechococcus sp. (strain RCC307).